A 513-amino-acid chain; its full sequence is MAVLLALFGALVLSGGLCVNQEERLIHHLFEERGYNKEVRPVASADEVVDVYLALTLSNLISLKEVDETLTTNVWVEQSWTDYRLQWNTSEFGGVDVLRLLPEMLWLPEIVLENNNDGLFEVAYYCNVLVYNTGYVYWLPPAIFRSACPINVNFFPFDWQNCTLKFSSLAYNAQEINMHLKEESDPETEKNYRVEWIIIDPEGFTENGEWEIIHRPARKNIHPSYPTESSEHQDITFYLIIKRKPLFYVINIVTPCVLIAFMAILVFYLPADSGEKMTLVISVLLAQSVFLLLVSQRLPATSHAIPLIGKYLLFIMLLVTAVVVICVVVLNFHFRTPSTHVMSDWVRGVFLEILPRLLHMSHPAESPAGAPCIRRCSSAGYIAKAEEYYSVKSRSELMFEKQSERHGLASRVTPARFAPAATSEEQLYDHLKPTLDEANFIVKHMREKNSYNEEKDNWNRVARTLDRLCLFLITPMLVVGTLWIFLMGIYNHPPPLPFSGDPFDYREENKRYI.

Positions Met-1–Cys-18 are cleaved as a signal peptide. Residues Val-19–Lys-244 are Extracellular-facing. N-linked (GlcNAc...) asparagine glycans are attached at residues Asn-88 and Asn-161. A disulfide bond links Cys-148 and Cys-162. 3 helical membrane passes run Pro-245–Leu-269, Met-277–Ser-295, and Tyr-311–Phe-332. The Cytoplasmic portion of the chain corresponds to His-333–Arg-467. The residue at position 388 (Tyr-388) is a Phosphotyrosine; by Tyr-kinases. The helical transmembrane segment at Leu-468–Tyr-490 threads the bilayer.

This sequence belongs to the ligand-gated ion channel (TC 1.A.9) family. Acetylcholine receptor (TC 1.A.9.1) subfamily. Pentamer of two alpha chains, and one each of the beta, delta, and gamma chains.

The protein localises to the postsynaptic cell membrane. The protein resides in the cell membrane. The catalysed reaction is K(+)(in) = K(+)(out). It catalyses the reaction Na(+)(in) = Na(+)(out). Its function is as follows. After binding acetylcholine, the AChR responds by an extensive change in conformation that affects all subunits and leads to opening of an ion-conducting channel across the plasma membrane. This chain is Acetylcholine receptor subunit delta (CHRND), found in Gallus gallus (Chicken).